Reading from the N-terminus, the 571-residue chain is Glycine--tRNA ligase (571 aa).

Arginine 99 and glutamate 165 together coordinate substrate. Residues 197-199 (RNE), 207-212 (IRLREF), 324-325 (EC), and 443-446 (GIDR) contribute to the ATP site. 212–216 (FTQAE) contributes to the substrate binding site. Substrate is bound at residue 439 to 443 (EPSFG).

Belongs to the class-II aminoacyl-tRNA synthetase family.

It is found in the cytoplasm. The enzyme catalyses tRNA(Gly) + glycine + ATP = glycyl-tRNA(Gly) + AMP + diphosphate. Catalyzes the attachment of glycine to tRNA(Gly). The polypeptide is Glycine--tRNA ligase (Pyrococcus abyssi (strain GE5 / Orsay)).